A 40-amino-acid polypeptide reads, in one-letter code: Photosystem II reaction center protein J (40 aa).

Residues 8–28 traverse the membrane as a helical segment; the sequence is IPLWLIGTVTGILVIGLIGFF.

Belongs to the PsbJ family. In terms of assembly, PSII is composed of 1 copy each of membrane proteins PsbA, PsbB, PsbC, PsbD, PsbE, PsbF, PsbH, PsbI, PsbJ, PsbK, PsbL, PsbM, PsbT, PsbX, PsbY, PsbZ, Psb30/Ycf12, at least 3 peripheral proteins of the oxygen-evolving complex and a large number of cofactors. It forms dimeric complexes.

The protein localises to the plastid. It is found in the chloroplast thylakoid membrane. One of the components of the core complex of photosystem II (PSII). PSII is a light-driven water:plastoquinone oxidoreductase that uses light energy to abstract electrons from H(2)O, generating O(2) and a proton gradient subsequently used for ATP formation. It consists of a core antenna complex that captures photons, and an electron transfer chain that converts photonic excitation into a charge separation. The chain is Photosystem II reaction center protein J from Zea mays (Maize).